The primary structure comprises 424 residues: Enolase (424 aa).

Residue Gln162 participates in (2R)-2-phosphoglycerate binding. Glu204 (proton donor) is an active-site residue. Asp241, Glu284, and Asp311 together coordinate Mg(2+). Lys336, Arg365, Ser366, and Lys387 together coordinate (2R)-2-phosphoglycerate. Lys336 functions as the Proton acceptor in the catalytic mechanism.

Belongs to the enolase family. Requires Mg(2+) as cofactor.

Its subcellular location is the cytoplasm. The protein resides in the secreted. It is found in the cell surface. The enzyme catalyses (2R)-2-phosphoglycerate = phosphoenolpyruvate + H2O. It functions in the pathway carbohydrate degradation; glycolysis; pyruvate from D-glyceraldehyde 3-phosphate: step 4/5. Catalyzes the reversible conversion of 2-phosphoglycerate (2-PG) into phosphoenolpyruvate (PEP). It is essential for the degradation of carbohydrates via glycolysis. This Rhizobium leguminosarum bv. trifolii (strain WSM2304) protein is Enolase.